Consider the following 288-residue polypeptide: Proteasome assembly chaperone 1 (288 aa).

A2 is modified (N-acetylalanine). Residues 13–35 form a disordered region; the sequence is PCRAGTEDEEEEEEGRRETPEDR. T18 is subject to Phosphothreonine. Basic and acidic residues predominate over residues 26-35; that stretch reads EGRRETPEDR. T54 is modified (phosphothreonine). The residue at position 180 (S180) is a Phosphoserine. At K264 the chain carries N6-acetyllysine.

It belongs to the PSMG1 family. Forms a heterodimer with PSMG2. The PSMG1-PSMG2 heterodimer interacts directly with the PSMA5 and PSMA7 proteasome alpha subunits. Degraded by the proteasome upon completion of 20S proteasome maturation. In the adult, detected in brain, colon, leukocytes, breast and testis. Widely expressed in the fetus. Also expressed in a variety of proliferating cell lines.

It is found in the cytoplasm. Its subcellular location is the endoplasmic reticulum. Functionally, chaperone protein which promotes assembly of the 20S proteasome as part of a heterodimer with PSMG2. The PSMG1-PSMG2 heterodimer binds to the PSMA5 and PSMA7 proteasome subunits, promotes assembly of the proteasome alpha subunits into the heteroheptameric alpha ring and prevents alpha ring dimerization. This Homo sapiens (Human) protein is Proteasome assembly chaperone 1.